The sequence spans 154 residues: Myoglobin (154 aa).

The Globin domain maps to 2-148; sequence GLSDGEWQIV…FRNDIAAKYK (147 aa). The residue at position 4 (Ser-4) is a Phosphoserine. His-65 lines the nitrite pocket. His-65 serves as a coordination point for O2. Phosphothreonine is present on Thr-68. Position 94 (His-94) interacts with heme b.

This sequence belongs to the globin family. As to quaternary structure, monomeric.

The protein resides in the cytoplasm. It localises to the sarcoplasm. It carries out the reaction Fe(III)-heme b-[protein] + nitric oxide + H2O = Fe(II)-heme b-[protein] + nitrite + 2 H(+). It catalyses the reaction H2O2 + AH2 = A + 2 H2O. Monomeric heme protein which primary function is to store oxygen and facilitate its diffusion within muscle tissues. Reversibly binds oxygen through a pentacoordinated heme iron and enables its timely and efficient release as needed during periods of heightened demand. Depending on the oxidative conditions of tissues and cells, and in addition to its ability to bind oxygen, it also has a nitrite reductase activity whereby it regulates the production of bioactive nitric oxide. Under stress conditions, like hypoxia and anoxia, it also protects cells against reactive oxygen species thanks to its pseudoperoxidase activity. This is Myoglobin (MB) from Canis lupus familiaris (Dog).